A 123-amino-acid chain; its full sequence is Small ribosomal subunit protein uS12 (123 aa).

At aspartate 89 the chain carries 3-methylthioaspartic acid.

The protein belongs to the universal ribosomal protein uS12 family. In terms of assembly, part of the 30S ribosomal subunit. Contacts proteins S8 and S17. May interact with IF1 in the 30S initiation complex.

Its function is as follows. With S4 and S5 plays an important role in translational accuracy. Interacts with and stabilizes bases of the 16S rRNA that are involved in tRNA selection in the A site and with the mRNA backbone. Located at the interface of the 30S and 50S subunits, it traverses the body of the 30S subunit contacting proteins on the other side and probably holding the rRNA structure together. The combined cluster of proteins S8, S12 and S17 appears to hold together the shoulder and platform of the 30S subunit. The chain is Small ribosomal subunit protein uS12 from Pelagibacter ubique (strain HTCC1062).